A 494-amino-acid chain; its full sequence is Cytochrome P450 2A11 (494 aa).

At Lys379 the chain carries N6-acetyllysine. Residue Cys439 participates in heme binding.

The protein belongs to the cytochrome P450 family. Requires heme as cofactor. In terms of tissue distribution, expressed in liver and lung as well as in nasal tissues.

It is found in the endoplasmic reticulum membrane. Its subcellular location is the microsome membrane. It catalyses the reaction an organic molecule + reduced [NADPH--hemoprotein reductase] + O2 = an alcohol + oxidized [NADPH--hemoprotein reductase] + H2O + H(+). Its function is as follows. Catalyzes the oxygenation of a variety of substrates, including ethanol and procarcinogens such as N-nitrosodiethylamine and phenacetin. Has no or little activity as a coumarin 7-hydroxylase and in the formation of androstenedione from testosterone. The protein is Cytochrome P450 2A11 (CYP2A11) of Oryctolagus cuniculus (Rabbit).